The primary structure comprises 364 residues: Paraneoplastic antigen Ma2 (364 aa).

Ala-2 carries the post-translational modification N-acetylalanine. A compositionally biased stretch (acidic residues) spans 335–351; the sequence is EEEEASFENESIEEPEE. The disordered stretch occupies residues 335–364; sequence EEEEASFENESIEEPEERDGYGRWNHEGDD. The segment covering 352 to 364 has biased composition (basic and acidic residues); it reads RDGYGRWNHEGDD.

The protein belongs to the PNMA family. In terms of tissue distribution, brain-specific. In some cancer patients, specifically expressed by testicular tumor cells.

The protein resides in the nucleus. Its subcellular location is the nucleolus. The protein is Paraneoplastic antigen Ma2 (PNMA2) of Homo sapiens (Human).